A 298-amino-acid polypeptide reads, in one-letter code: Plasmodesmata-located protein 7 (298 aa).

Residues 1 to 30 form the signal peptide; sequence MPMAKLRNIIKTLSIFFFLIAATAPSLSSA. Topologically, residues 31 to 258 are extracellular; the sequence is TSATDTFVFG…YKTNYGGEKT (228 aa). 2 Gnk2-homologous domains span residues 35 to 139 and 140 to 240; these read DTFV…NISF and LGQE…TDGA. 6 cysteine pairs are disulfide-bonded: C42–C117, C93–C102, C105–C130, C152–C218, C194–C203, and C206–C231. Residues 259 to 279 form a helical membrane-spanning segment; sequence FAIIIGLLAAVVLLIIFLLFL. The necessary and sufficient for plasmodesmal targeting stretch occupies residues 259–279; that stretch reads FAIIIGLLAAVVLLIIFLLFL. The Cytoplasmic segment spans residues 280-298; that stretch reads RGVCSRGGDFSILHSFTLI.

This sequence belongs to the cysteine-rich repeat secretory protein family. Plasmodesmata-located proteins (PDLD) subfamily. In terms of assembly, (Microbial infection) Interacts with Grapevine fanleaf virus (GFLV) 2B-MP. In terms of tissue distribution, highly expressed in lateral root and elongation zone.

It localises to the cell membrane. The protein resides in the cell junction. Its subcellular location is the plasmodesma. In terms of biological role, modulates cell-to-cell trafficking. The sequence is that of Plasmodesmata-located protein 7 from Arabidopsis thaliana (Mouse-ear cress).